A 282-amino-acid chain; its full sequence is 2-dehydro-3-deoxyphosphooctonate aldolase (282 aa).

It belongs to the KdsA family.

The protein localises to the cytoplasm. It carries out the reaction D-arabinose 5-phosphate + phosphoenolpyruvate + H2O = 3-deoxy-alpha-D-manno-2-octulosonate-8-phosphate + phosphate. It functions in the pathway carbohydrate biosynthesis; 3-deoxy-D-manno-octulosonate biosynthesis; 3-deoxy-D-manno-octulosonate from D-ribulose 5-phosphate: step 2/3. It participates in bacterial outer membrane biogenesis; lipopolysaccharide biosynthesis. The polypeptide is 2-dehydro-3-deoxyphosphooctonate aldolase (Shewanella oneidensis (strain ATCC 700550 / JCM 31522 / CIP 106686 / LMG 19005 / NCIMB 14063 / MR-1)).